The chain runs to 308 residues: Ribosomal protein L11 methyltransferase (308 aa).

4 residues coordinate S-adenosyl-L-methionine: T148, G169, D191, and N239.

It belongs to the methyltransferase superfamily. PrmA family.

It is found in the cytoplasm. It carries out the reaction L-lysyl-[protein] + 3 S-adenosyl-L-methionine = N(6),N(6),N(6)-trimethyl-L-lysyl-[protein] + 3 S-adenosyl-L-homocysteine + 3 H(+). In terms of biological role, methylates ribosomal protein L11. The sequence is that of Ribosomal protein L11 methyltransferase from Psychrobacter cryohalolentis (strain ATCC BAA-1226 / DSM 17306 / VKM B-2378 / K5).